A 375-amino-acid polypeptide reads, in one-letter code: tRNA-specific 2-thiouridylase MnmA (375 aa).

Residues 7 to 14 (GLSGGVDS) and Met33 each bind ATP. An interaction with target base in tRNA region spans residues 102–104 (NPD). The active-site Nucleophile is Cys107. A disulfide bridge links Cys107 with Cys205. Residue Gly132 coordinates ATP. The interval 155–157 (KDQ) is interaction with tRNA. The active-site Cysteine persulfide intermediate is Cys205. Residues 313-314 (RY) are interaction with tRNA.

This sequence belongs to the MnmA/TRMU family.

It is found in the cytoplasm. It catalyses the reaction S-sulfanyl-L-cysteinyl-[protein] + uridine(34) in tRNA + AH2 + ATP = 2-thiouridine(34) in tRNA + L-cysteinyl-[protein] + A + AMP + diphosphate + H(+). Its function is as follows. Catalyzes the 2-thiolation of uridine at the wobble position (U34) of tRNA, leading to the formation of s(2)U34. This chain is tRNA-specific 2-thiouridylase MnmA, found in Phytoplasma australiense.